The chain runs to 483 residues: UDP-N-acetylmuramoylalanine--D-glutamate ligase (483 aa).

119–125 (GTNGKTT) contributes to the ATP binding site.

This sequence belongs to the MurCDEF family.

The protein resides in the cytoplasm. The catalysed reaction is UDP-N-acetyl-alpha-D-muramoyl-L-alanine + D-glutamate + ATP = UDP-N-acetyl-alpha-D-muramoyl-L-alanyl-D-glutamate + ADP + phosphate + H(+). The protein operates within cell wall biogenesis; peptidoglycan biosynthesis. In terms of biological role, cell wall formation. Catalyzes the addition of glutamate to the nucleotide precursor UDP-N-acetylmuramoyl-L-alanine (UMA). The chain is UDP-N-acetylmuramoylalanine--D-glutamate ligase from Mycolicibacterium vanbaalenii (strain DSM 7251 / JCM 13017 / BCRC 16820 / KCTC 9966 / NRRL B-24157 / PYR-1) (Mycobacterium vanbaalenii).